Reading from the N-terminus, the 264-residue chain is Thiazole synthase (264 aa).

The active-site Schiff-base intermediate with DXP is the Lys-106. 1-deoxy-D-xylulose 5-phosphate contacts are provided by residues Gly-167, 193 to 194 (AG), and 215 to 216 (NS).

This sequence belongs to the ThiG family. As to quaternary structure, homotetramer. Forms heterodimers with either ThiH or ThiS.

It is found in the cytoplasm. The enzyme catalyses [ThiS sulfur-carrier protein]-C-terminal-Gly-aminoethanethioate + 2-iminoacetate + 1-deoxy-D-xylulose 5-phosphate = [ThiS sulfur-carrier protein]-C-terminal Gly-Gly + 2-[(2R,5Z)-2-carboxy-4-methylthiazol-5(2H)-ylidene]ethyl phosphate + 2 H2O + H(+). It participates in cofactor biosynthesis; thiamine diphosphate biosynthesis. Its function is as follows. Catalyzes the rearrangement of 1-deoxy-D-xylulose 5-phosphate (DXP) to produce the thiazole phosphate moiety of thiamine. Sulfur is provided by the thiocarboxylate moiety of the carrier protein ThiS. In vitro, sulfur can be provided by H(2)S. This is Thiazole synthase from Ectopseudomonas mendocina (strain ymp) (Pseudomonas mendocina).